Here is a 185-residue protein sequence, read N- to C-terminus: Ribosome-recycling factor (185 aa).

Belongs to the RRF family.

The protein localises to the cytoplasm. Functionally, responsible for the release of ribosomes from messenger RNA at the termination of protein biosynthesis. May increase the efficiency of translation by recycling ribosomes from one round of translation to another. In Salinispora arenicola (strain CNS-205), this protein is Ribosome-recycling factor.